A 362-amino-acid chain; its full sequence is S-adenosylmethionine:tRNA ribosyltransferase-isomerase (362 aa).

It belongs to the QueA family. As to quaternary structure, monomer.

The protein localises to the cytoplasm. The catalysed reaction is 7-aminomethyl-7-carbaguanosine(34) in tRNA + S-adenosyl-L-methionine = epoxyqueuosine(34) in tRNA + adenine + L-methionine + 2 H(+). It functions in the pathway tRNA modification; tRNA-queuosine biosynthesis. Its function is as follows. Transfers and isomerizes the ribose moiety from AdoMet to the 7-aminomethyl group of 7-deazaguanine (preQ1-tRNA) to give epoxyqueuosine (oQ-tRNA). The chain is S-adenosylmethionine:tRNA ribosyltransferase-isomerase from Syntrophus aciditrophicus (strain SB).